The sequence spans 153 residues: Histone H2B.4 (153 aa).

Composition is skewed to basic and acidic residues over residues 1–10 (MAPKKDEKPA) and 20–54 (AKAE…GEKK). The disordered stretch occupies residues 1 to 60 (MAPKKDEKPATAEAGAEAPAKAEAKPKAEKAAKKAKKEPSKKAAKEPKGDGEKKDKKKKK). An N6-acetyllysine mark is found at K41 and K42. K149 participates in a covalent cross-link: Glycyl lysine isopeptide (Lys-Gly) (interchain with G-Cter in ubiquitin).

This sequence belongs to the histone H2B family. As to quaternary structure, the nucleosome is a histone octamer containing two molecules each of H2A, H2B, H3 and H4 assembled in one H3-H4 heterotetramer and two H2A-H2B heterodimers. The octamer wraps approximately 147 bp of DNA. Post-translationally, the N-terminus is blocked. Can be acetylated to form H2BK33ac and H2BK34ac. Acetylated mainly on the ubiquitinated form. In terms of processing, monoubiquitinated to form H2BK143ub1; which is increased during the light period and may give a specific tag for epigenetic transcriptional activation.

The protein localises to the nucleus. It is found in the chromosome. Its function is as follows. Core component of nucleosome. Nucleosomes wrap and compact DNA into chromatin, limiting DNA accessibility to the cellular machineries which require DNA as a template. Histones thereby play a central role in transcription regulation, DNA repair, DNA replication and chromosomal stability. DNA accessibility is regulated via a complex set of post-translational modifications of histones, also called histone code, and nucleosome remodeling. The polypeptide is Histone H2B.4 (Chlamydomonas reinhardtii (Chlamydomonas smithii)).